Here is a 133-residue protein sequence, read N- to C-terminus: Holo-[acyl-carrier-protein] synthase (133 aa).

Mg(2+) contacts are provided by Asp-8 and Glu-57.

The protein belongs to the P-Pant transferase superfamily. AcpS family. The cofactor is Mg(2+).

It is found in the cytoplasm. The enzyme catalyses apo-[ACP] + CoA = holo-[ACP] + adenosine 3',5'-bisphosphate + H(+). Its function is as follows. Transfers the 4'-phosphopantetheine moiety from coenzyme A to a Ser of acyl-carrier-protein. In Bartonella quintana (strain Toulouse) (Rochalimaea quintana), this protein is Holo-[acyl-carrier-protein] synthase.